An 857-amino-acid polypeptide reads, in one-letter code: Leucine--tRNA ligase (857 aa).

Residues 42-52 (PYPSGRLHMGH) carry the 'HIGH' region motif. The 'KMSKS' region signature appears at 617–621 (KMSKS). Lys-620 lines the ATP pocket.

It belongs to the class-I aminoacyl-tRNA synthetase family.

It is found in the cytoplasm. It carries out the reaction tRNA(Leu) + L-leucine + ATP = L-leucyl-tRNA(Leu) + AMP + diphosphate. This is Leucine--tRNA ligase from Vibrio vulnificus (strain CMCP6).